A 260-amino-acid chain; its full sequence is Uridylate kinase (260 aa).

Position 29-32 (29-32 (KLSG)) interacts with ATP. Residues 37–42 (GDLGYG) form an involved in allosteric activation by GTP region. Position 71 (G71) interacts with UMP. Residues G72 and R76 each contribute to the ATP site. UMP contacts are provided by residues D91 and 152–159 (SGNPFFTT). T179, Y185, and D188 together coordinate ATP.

Belongs to the UMP kinase family. In terms of assembly, homohexamer.

Its subcellular location is the cytoplasm. It catalyses the reaction UMP + ATP = UDP + ADP. The protein operates within pyrimidine metabolism; CTP biosynthesis via de novo pathway; UDP from UMP (UMPK route): step 1/1. Its activity is regulated as follows. Allosterically activated by GTP. Inhibited by UTP. Functionally, catalyzes the reversible phosphorylation of UMP to UDP. This chain is Uridylate kinase, found in Synechocystis sp. (strain ATCC 27184 / PCC 6803 / Kazusa).